The chain runs to 518 residues: Major facilitator superfamily multidrug transporter mfsC (518 aa).

Transmembrane regions (helical) follow at residues 27 to 47 (VLLT…SVLF), 65 to 85 (WVLI…GQLG), 88 to 108 (FGLE…NVIN), 123 to 143 (ISGV…SNTF), 152 to 172 (ALAI…VVGS), 183 to 203 (IFWL…LFLP), and 212 to 232 (PIDI…VYGL). Residue asparagine 233 is glycosylated (N-linked (GlcNAc...) asparagine). The next 7 membrane-spanning stretches (helical) occupy residues 242 to 262 (SAAM…FLWV), 281 to 301 (FLVM…WFFI), 315 to 335 (ILTA…GVFA), 347 to 367 (ILVA…FAGP), 380 to 400 (TAII…SILL), 409 to 429 (AVAG…ILAG), and 455 to 475 (AFWL…VCYW).

This sequence belongs to the major facilitator superfamily. EmrB family.

The protein resides in the membrane. Major facilitator superfamily transporter that may be involved in A.fumigatus adaptation to azoles such as vorizonazole. This is Major facilitator superfamily multidrug transporter mfsC from Aspergillus fumigatus (strain ATCC MYA-4609 / CBS 101355 / FGSC A1100 / Af293) (Neosartorya fumigata).